We begin with the raw amino-acid sequence, 396 residues long: Anhydro-N-acetylmuramic acid kinase (396 aa).

An ATP-binding site is contributed by 19-26; sequence GTSADGID.

Belongs to the anhydro-N-acetylmuramic acid kinase family.

It catalyses the reaction 1,6-anhydro-N-acetyl-beta-muramate + ATP + H2O = N-acetyl-D-muramate 6-phosphate + ADP + H(+). The protein operates within amino-sugar metabolism; 1,6-anhydro-N-acetylmuramate degradation. Its pathway is cell wall biogenesis; peptidoglycan recycling. Catalyzes the specific phosphorylation of 1,6-anhydro-N-acetylmuramic acid (anhMurNAc) with the simultaneous cleavage of the 1,6-anhydro ring, generating MurNAc-6-P. Is required for the utilization of anhMurNAc either imported from the medium or derived from its own cell wall murein, and thus plays a role in cell wall recycling. In Colwellia psychrerythraea (strain 34H / ATCC BAA-681) (Vibrio psychroerythus), this protein is Anhydro-N-acetylmuramic acid kinase.